Here is a 316-residue protein sequence, read N- to C-terminus: Transaldolase (316 aa).

The active-site Schiff-base intermediate with substrate is Lys132.

It belongs to the transaldolase family. Type 1 subfamily. Homodimer.

It is found in the cytoplasm. It carries out the reaction D-sedoheptulose 7-phosphate + D-glyceraldehyde 3-phosphate = D-erythrose 4-phosphate + beta-D-fructose 6-phosphate. It participates in carbohydrate degradation; pentose phosphate pathway; D-glyceraldehyde 3-phosphate and beta-D-fructose 6-phosphate from D-ribose 5-phosphate and D-xylulose 5-phosphate (non-oxidative stage): step 2/3. In terms of biological role, transaldolase is important for the balance of metabolites in the pentose-phosphate pathway. In Vibrio parahaemolyticus serotype O3:K6 (strain RIMD 2210633), this protein is Transaldolase.